Reading from the N-terminus, the 282-residue chain is Pantothenate synthetase (282 aa).

30-37 serves as a coordination point for ATP; the sequence is MGYLHEGH. Histidine 37 functions as the Proton donor in the catalytic mechanism. Glutamine 61 is a (R)-pantoate binding site. Glutamine 61 provides a ligand contact to beta-alanine. Residue 147-150 coordinates ATP; that stretch reads GQKD. A (R)-pantoate-binding site is contributed by glutamine 153. ATP is bound by residues valine 176 and 184–187; that span reads LSSR.

Belongs to the pantothenate synthetase family. As to quaternary structure, homodimer.

It is found in the cytoplasm. It carries out the reaction (R)-pantoate + beta-alanine + ATP = (R)-pantothenate + AMP + diphosphate + H(+). It functions in the pathway cofactor biosynthesis; (R)-pantothenate biosynthesis; (R)-pantothenate from (R)-pantoate and beta-alanine: step 1/1. In terms of biological role, catalyzes the condensation of pantoate with beta-alanine in an ATP-dependent reaction via a pantoyl-adenylate intermediate. In Desulfitobacterium hafniense (strain DSM 10664 / DCB-2), this protein is Pantothenate synthetase.